Reading from the N-terminus, the 147-residue chain is uncharacterized protein (147 aa).

In terms of domain architecture, N-acetyltransferase spans 7-147 (LEINYKTDEL…GHDVLVWAPK (141 aa)).

This is an uncharacterized protein from Staphylococcus haemolyticus (strain JCSC1435).